The following is a 204-amino-acid chain: Holliday junction branch migration complex subunit RuvA (204 aa).

A domain I region spans residues 1–64 (MIGRLRGTLI…EDAQLLYGFN (64 aa)). The domain II stretch occupies residues 65–143 (TVSERALFRE…GWGAGDLFTP (79 aa)). Residues 144 to 155 (ATDAAPVDSTPV) are flexible linker. The segment at 156-204 (IAQNAQEEAMSALLALGYKPPQASKAVSQVAKAGMSSEELIREALKSMV) is domain III.

Belongs to the RuvA family. In terms of assembly, homotetramer. Forms an RuvA(8)-RuvB(12)-Holliday junction (HJ) complex. HJ DNA is sandwiched between 2 RuvA tetramers; dsDNA enters through RuvA and exits via RuvB. An RuvB hexamer assembles on each DNA strand where it exits the tetramer. Each RuvB hexamer is contacted by two RuvA subunits (via domain III) on 2 adjacent RuvB subunits; this complex drives branch migration. In the full resolvosome a probable DNA-RuvA(4)-RuvB(12)-RuvC(2) complex forms which resolves the HJ.

It localises to the cytoplasm. In terms of biological role, the RuvA-RuvB-RuvC complex processes Holliday junction (HJ) DNA during genetic recombination and DNA repair, while the RuvA-RuvB complex plays an important role in the rescue of blocked DNA replication forks via replication fork reversal (RFR). RuvA specifically binds to HJ cruciform DNA, conferring on it an open structure. The RuvB hexamer acts as an ATP-dependent pump, pulling dsDNA into and through the RuvAB complex. HJ branch migration allows RuvC to scan DNA until it finds its consensus sequence, where it cleaves and resolves the cruciform DNA. This Vibrio cholerae serotype O1 (strain ATCC 39541 / Classical Ogawa 395 / O395) protein is Holliday junction branch migration complex subunit RuvA.